A 59-amino-acid polypeptide reads, in one-letter code: uncharacterized protein (59 aa).

This is an uncharacterized protein from Haemophilus influenzae (strain ATCC 51907 / DSM 11121 / KW20 / Rd).